The following is a 312-amino-acid chain: Methionyl-tRNA formyltransferase (312 aa).

Position 109–112 (109–112) interacts with (6S)-5,6,7,8-tetrahydrofolate; the sequence is SLLP.

It belongs to the Fmt family.

The catalysed reaction is L-methionyl-tRNA(fMet) + (6R)-10-formyltetrahydrofolate = N-formyl-L-methionyl-tRNA(fMet) + (6S)-5,6,7,8-tetrahydrofolate + H(+). In terms of biological role, attaches a formyl group to the free amino group of methionyl-tRNA(fMet). The formyl group appears to play a dual role in the initiator identity of N-formylmethionyl-tRNA by promoting its recognition by IF2 and preventing the misappropriation of this tRNA by the elongation apparatus. In Listeria monocytogenes serotype 4a (strain HCC23), this protein is Methionyl-tRNA formyltransferase.